The primary structure comprises 606 residues: Glutamine--fructose-6-phosphate aminotransferase [isomerizing] (606 aa).

Catalysis depends on Cys-2, which acts as the Nucleophile; for GATase activity. A Glutamine amidotransferase type-2 domain is found at 2–218 (CGIFGYLGEK…SGELAVLRIG (217 aa)). 2 consecutive SIS domains span residues 278–424 (FTES…HRQV) and 448–596 (LDSS…VDRP). Residue Lys-601 is the For Fru-6P isomerization activity of the active site.

As to quaternary structure, homodimer.

The protein resides in the cytoplasm. The enzyme catalyses D-fructose 6-phosphate + L-glutamine = D-glucosamine 6-phosphate + L-glutamate. Its function is as follows. Catalyzes the first step in hexosamine metabolism, converting fructose-6P into glucosamine-6P using glutamine as a nitrogen source. The protein is Glutamine--fructose-6-phosphate aminotransferase [isomerizing] of Chlamydia trachomatis serovar D (strain ATCC VR-885 / DSM 19411 / UW-3/Cx).